The sequence spans 564 residues: MTETAKRPLYVPHAGPSLLEMPLLNKGSAFSTQERIDFNLQGLLPHNIETIEEQTERAYSQYNLCNTDLDRHIFLRSIQDNNETLFFRLLEEHLEEMMPIIYTPTVGQACQEFSKIYRTHRGLFISYPDRERIDDILRSATKNNVKIVVVTDSERILGLGDQGIGGMGIPIGKLSLYTACGGISPAYTLPVVLDVGTNNPDLLNDPMYMGWRHERVSGAQYEEFVDLFIQAIKRRWPNVLLQFEDFAQTNAMPLLERYKDELCCFNDDIQGTAAVAVGTLLAACKAKGEKLSEQTVTFVGAGSAGCGIAEQIIAAMQLEGLDEAQARRRIFMVDRWGLLTDDMSNLLDFQHRLAQKRADLGAWGGQQGDDLALLEVIRNARPTVLIGVSGQRGLFSEEVIRELHSHCKQPLVMPLSNPTSRVEATPQEILNWTDGQALVATGSPFQPVQVGDKRIPIAQCNNAYIFPGIGLGVIAVRANRVTEGMLMAAANALANCSPIVTQGEGAVLPALGDIREVSKRIAVAVAKQAQAEGKALHTSDEVLNDAIEANFWFPRYRAYRRTSF.

Tyr-102 acts as the Proton donor in catalysis. Arg-155 contacts NAD(+). Lys-173 (proton acceptor) is an active-site residue. 3 residues coordinate a divalent metal cation: Glu-244, Asp-245, and Asp-268. Residues Asp-268 and Asn-417 each contribute to the NAD(+) site.

It belongs to the malic enzymes family. In terms of assembly, homotetramer. The cofactor is Mg(2+). It depends on Mn(2+) as a cofactor.

The catalysed reaction is (S)-malate + NAD(+) = pyruvate + CO2 + NADH. The enzyme catalyses oxaloacetate + H(+) = pyruvate + CO2. The sequence is that of NAD-dependent malic enzyme from Pseudomonas aeruginosa (strain LESB58).